The chain runs to 361 residues: Phosphoserine aminotransferase (361 aa).

Position 43 (Arg-43) interacts with L-glutamate. Residues 77–78, Trp-103, Thr-153, Asp-173, and Gln-196 contribute to the pyridoxal 5'-phosphate site; that span reads AS. Lys-197 is subject to N6-(pyridoxal phosphate)lysine. Residue 238-239 coordinates pyridoxal 5'-phosphate; that stretch reads NT.

It belongs to the class-V pyridoxal-phosphate-dependent aminotransferase family. SerC subfamily. As to quaternary structure, homodimer. Requires pyridoxal 5'-phosphate as cofactor.

It is found in the cytoplasm. It catalyses the reaction O-phospho-L-serine + 2-oxoglutarate = 3-phosphooxypyruvate + L-glutamate. The enzyme catalyses 4-(phosphooxy)-L-threonine + 2-oxoglutarate = (R)-3-hydroxy-2-oxo-4-phosphooxybutanoate + L-glutamate. The protein operates within amino-acid biosynthesis; L-serine biosynthesis; L-serine from 3-phospho-D-glycerate: step 2/3. It functions in the pathway cofactor biosynthesis; pyridoxine 5'-phosphate biosynthesis; pyridoxine 5'-phosphate from D-erythrose 4-phosphate: step 3/5. In terms of biological role, catalyzes the reversible conversion of 3-phosphohydroxypyruvate to phosphoserine and of 3-hydroxy-2-oxo-4-phosphonooxybutanoate to phosphohydroxythreonine. The protein is Phosphoserine aminotransferase of Pseudomonas fluorescens (strain SBW25).